Consider the following 427-residue polypeptide: Ribosomal protein uS12 methylthiotransferase RimO (427 aa).

The MTTase N-terminal domain occupies 1 to 116; it reads MNFYVEVLGC…IATHIGKRNV (116 aa). Positions 10, 46, 79, 145, 149, and 152 each coordinate [4Fe-4S] cluster. Residues 131 to 360 enclose the Radical SAM core domain; that stretch reads VDNGQYAYVK…MDIQSQISFE (230 aa). The TRAM domain occupies 363–426; it reads EKLVGKKLKV…IYDLEGEIVE (64 aa).

This sequence belongs to the methylthiotransferase family. RimO subfamily. It depends on [4Fe-4S] cluster as a cofactor.

Its subcellular location is the cytoplasm. The catalysed reaction is L-aspartate(89)-[ribosomal protein uS12]-hydrogen + (sulfur carrier)-SH + AH2 + 2 S-adenosyl-L-methionine = 3-methylsulfanyl-L-aspartate(89)-[ribosomal protein uS12]-hydrogen + (sulfur carrier)-H + 5'-deoxyadenosine + L-methionine + A + S-adenosyl-L-homocysteine + 2 H(+). Functionally, catalyzes the methylthiolation of an aspartic acid residue of ribosomal protein uS12. This chain is Ribosomal protein uS12 methylthiotransferase RimO, found in Thermosipho melanesiensis (strain DSM 12029 / CIP 104789 / BI429).